Here is a 367-residue protein sequence, read N- to C-terminus: Dual specificity protein phosphatase 1 (367 aa).

The region spanning 20–137 is the Rhodanese domain; sequence GAAQCLLLDC…FSASCPELCS (118 aa). One can recognise a Tyrosine-protein phosphatase domain in the interval 173 to 314; it reads GPVEILSFLY…LLQFESQVLA (142 aa). The active-site Phosphocysteine intermediate is C258. Phosphoserine; by MAPK1 and MAPK3 occurs at positions 359 and 364.

The protein belongs to the protein-tyrosine phosphatase family. Non-receptor class dual specificity subfamily. Phosphorylation at Ser-359 and Ser-364 by MAPK1/ERK2 and MAPK3/ERK1 reduces its rate of degradation. Post-translationally, 'Lys-48'-linked polyubiquitinated by NEURL3, leading to proteasomal degradation.

The protein localises to the nucleus. It catalyses the reaction O-phospho-L-tyrosyl-[protein] + H2O = L-tyrosyl-[protein] + phosphate. The catalysed reaction is O-phospho-L-seryl-[protein] + H2O = L-seryl-[protein] + phosphate. It carries out the reaction O-phospho-L-threonyl-[protein] + H2O = L-threonyl-[protein] + phosphate. In terms of biological role, dual specificity phosphatase that dephosphorylates MAP kinase MAPK1/ERK2 on both 'Thr-183' and 'Tyr-185', regulating its activity during the meiotic cell cycle. This is Dual specificity protein phosphatase 1 from Mus musculus (Mouse).